Reading from the N-terminus, the 159-residue chain is Putative ribosomal RNA large subunit methyltransferase H (159 aa).

S-adenosyl-L-methionine-binding positions include L76, G108, and F127–F132.

This sequence belongs to the RNA methyltransferase RlmH family.

Its subcellular location is the cytoplasm. The catalysed reaction is pseudouridine(1915) in 23S rRNA + S-adenosyl-L-methionine = N(3)-methylpseudouridine(1915) in 23S rRNA + S-adenosyl-L-homocysteine + H(+). In terms of biological role, specifically methylates the pseudouridine at position 1915 (m3Psi1915) in 23S rRNA. The protein is Putative ribosomal RNA large subunit methyltransferase H of Methanococcus maripaludis (strain C7 / ATCC BAA-1331).